We begin with the raw amino-acid sequence, 633 residues long: Probable potassium transport system protein Kup (633 aa).

Transmembrane regions (helical) follow at residues 19 to 39 (LGML…SPLY), 61 to 81 (ILAL…VLFI), 112 to 132 (VLVI…MITP), 148 to 168 (SGLE…LFLI), 179 to 199 (LFGP…INGI), 217 to 237 (FFIV…LALT), 258 to 278 (WFAL…ALLL), 290 to 310 (LLAP…ATVI), 348 to 368 (IYIG…VLGF), 380 to 400 (VAVT…MLLL), 405 to 425 (PVLA…FFAA), and 430 to 450 (IFQG…LMTT).

It belongs to the HAK/KUP transporter (TC 2.A.72) family.

Its subcellular location is the cell inner membrane. It catalyses the reaction K(+)(in) + H(+)(in) = K(+)(out) + H(+)(out). In terms of biological role, transport of potassium into the cell. Likely operates as a K(+):H(+) symporter. The protein is Probable potassium transport system protein Kup of Pseudomonas fluorescens (strain ATCC BAA-477 / NRRL B-23932 / Pf-5).